The primary structure comprises 198 residues: Glycerol-3-phosphate acyltransferase 3 (198 aa).

The next 4 membrane-spanning stretches (helical) occupy residues 4–24 (TYLL…LVVG), 71–91 (LPMV…AVLG), 113–133 (LLCY…TLLF), and 147–167 (VVAV…AMCL).

It belongs to the PlsY family. Probably interacts with PlsX.

The protein resides in the cell membrane. It carries out the reaction an acyl phosphate + sn-glycerol 3-phosphate = a 1-acyl-sn-glycero-3-phosphate + phosphate. The protein operates within lipid metabolism; phospholipid metabolism. In terms of biological role, catalyzes the transfer of an acyl group from acyl-phosphate (acyl-PO(4)) to glycerol-3-phosphate (G3P) to form lysophosphatidic acid (LPA). This enzyme utilizes acyl-phosphate as fatty acyl donor, but not acyl-CoA or acyl-ACP. This Bacillus anthracis protein is Glycerol-3-phosphate acyltransferase 3.